Here is a 388-residue protein sequence, read N- to C-terminus: MLTSMKSKFDTLFNTQPEVAAFAPGRINLIGEHTDYNGGYVFPAAIELGTYGLASKRNDNKICLYSNNFESTGTIEFSLDELQFDTTHSWANYPKGMVKFLKESGYQIDSGFNILIEGNIPNGASLSSSASIEILMGWLLKALFNLEVERLELIELGRKVENQFIGVNSGIMDQFIVGMGRKDQAILLDTATLEYHYVPTEFGDYVISIMNTNKRRELAESKYNERLKECQSALALLQQELDVDALGHIDVTTFEKHAYLIEEDVLLRRARHAITENARVKEAHAALNRKDFIEFGRLLNASHASLKNDYEVTGIELDTLAETAQQVEGVLGARMTGAGFAGCAIALVHKDRIKDLEEEVTKIYKDKIGYEPSFYHVDIGDGVKYIKI.

32–35 (EHTD) contacts substrate. ATP contacts are provided by residues serine 66 and 123–129 (GASLSSS). Residues serine 129 and glutamate 161 each contribute to the Mg(2+) site. Catalysis depends on aspartate 173, which acts as the Proton acceptor. Tyrosine 223 is a binding site for substrate.

This sequence belongs to the GHMP kinase family. GalK subfamily.

The protein resides in the cytoplasm. It catalyses the reaction alpha-D-galactose + ATP = alpha-D-galactose 1-phosphate + ADP + H(+). It participates in carbohydrate metabolism; galactose metabolism. In terms of biological role, catalyzes the transfer of the gamma-phosphate of ATP to D-galactose to form alpha-D-galactose-1-phosphate (Gal-1-P). The polypeptide is Galactokinase (Staphylococcus carnosus (strain TM300)).